An 89-amino-acid chain; its full sequence is Small ribosomal subunit protein uS15 (89 aa).

The disordered stretch occupies residues 1-24; it reads MALTQTKKQELISQYQAHETDTGS.

Belongs to the universal ribosomal protein uS15 family. As to quaternary structure, part of the 30S ribosomal subunit. Forms a bridge to the 50S subunit in the 70S ribosome, contacting the 23S rRNA.

Functionally, one of the primary rRNA binding proteins, it binds directly to 16S rRNA where it helps nucleate assembly of the platform of the 30S subunit by binding and bridging several RNA helices of the 16S rRNA. Forms an intersubunit bridge (bridge B4) with the 23S rRNA of the 50S subunit in the ribosome. This is Small ribosomal subunit protein uS15 from Microcystis aeruginosa (strain NIES-843 / IAM M-2473).